A 365-amino-acid chain; its full sequence is Outer capsid protein sigma-3 (365 aa).

The segment at 51–73 adopts a CCHC-type zinc-finger fold; the sequence is CMHCLGVVGSLQRKLKHLPHHKC.

This sequence belongs to the orthoreovirus sigma-3 protein family. As to quaternary structure, heterohexamer of three sigma-3 and three Mu-1 proteins. The RNA-binding form is probably a homodimer. In terms of processing, cleaved during virus the endosomal proteolytic disassembly of the outer capsid.

The protein resides in the virion. Its subcellular location is the host cytoplasm. It localises to the host nucleus. In terms of biological role, stimulates translation by blocking the activation of the dsRNA-dependent protein kinase EIF2AK2/PKR, thereby inhibiting the host interferon response. Sigma3 prevents the activation of EIF2AK2 by competing with the kinase for dsRNA-binding. The viral outer shell polypeptides, of which sigma-3 is one, impose structural constraints that prevent elongation of nascent transcripts by the RNA-dependent RNA polymerase lambda-3. This chain is Outer capsid protein sigma-3 (S4), found in Mammalia (T2J).